Here is an 881-residue protein sequence, read N- to C-terminus: MSGVNEIRSSFIDYFVKNGHEAVASSPLVPRNDPTLMFTNAGMVQFKNVFTGVEKRPYSRAVTAQKCVRAGGKHNDLDNVGYTARHHTFFEMLGNFSFGDYFKDRAIELAWNLITKEWDLPKDRLLATVYYDDDVAYDLWKKVAGLPDSRIIRIPTSDNFWAMGDTGPCGPCSEIFFDHGDHIPGGPPGSPDEDGDRFIEIWNLVFMQYEQLPGERLNLPRPSIDTGMGLERISALLQGTHDNYETDLMRAIIAEVQELTNVPSNGPQKASHRVIADHLRSSVFLVADGVLPSNEGRGYVLRRIMRRAMRHAQLLGAREPLMHRLVPVLVREMGRAYPEIVRAEALATETLLLEETRFRRTLERGLSLLEEESAGLVSGARFPGEVAFKLYDTYGFPLDLTEDALRGRGIEVEREAFDAAMERQKAEARANWSGSGEAATDTVWFGVREREGATEFLGYDTETAEGAVRALVQEGKEVSELPAGARGFVVLNQTPFYGESGGQVGDSGLVSGEGVKACVLNTQKKLGDVFVHDVEVTEGTLKIGTPLALEVDHARRSAVRANHSATHLLHEALRRVLGDHVAQKGSLVAPDRLRFDFSHPKPLTADELAQVEDIANTYVLRNEPVETRLMAVDDAVASGARALFGEKYGDEVRVVSMGTDSGNGAPFSVELCGGTHVKRTGDIGIVTVLADSGVAAGVRRLEALTATAARRHLNAASTALQTTAGTLKVSTAEVEARVAALVEERRKLERDLAEARKKLAMGGGGESGPAVIEVNGTRYLRIAISGADPKDLKAIVDEGKTKIGSGVVAVANTAADGKGALVVGVTADLAGKFDAQKLVRIGVEVLGGKGGGGRPDMAQGGGPDGAKADAALAAIESALGA.

Residues His563, His567, Cys672, and His676 each coordinate Zn(2+).

Belongs to the class-II aminoacyl-tRNA synthetase family. The cofactor is Zn(2+).

The protein localises to the cytoplasm. The enzyme catalyses tRNA(Ala) + L-alanine + ATP = L-alanyl-tRNA(Ala) + AMP + diphosphate. Catalyzes the attachment of alanine to tRNA(Ala) in a two-step reaction: alanine is first activated by ATP to form Ala-AMP and then transferred to the acceptor end of tRNA(Ala). Also edits incorrectly charged Ser-tRNA(Ala) and Gly-tRNA(Ala) via its editing domain. This is Alanine--tRNA ligase from Azorhizobium caulinodans (strain ATCC 43989 / DSM 5975 / JCM 20966 / LMG 6465 / NBRC 14845 / NCIMB 13405 / ORS 571).